The sequence spans 67 residues: Protein AaeX (67 aa).

Helical transmembrane passes span Leu3 to Leu23 and Phe43 to Ser63.

This sequence belongs to the AaeX family.

The protein resides in the cell membrane. The chain is Protein AaeX from Enterobacter sp. (strain 638).